Consider the following 408-residue polypeptide: Peptidase T (408 aa).

His78 is a binding site for Zn(2+). Residue Asp80 is part of the active site. A Zn(2+)-binding site is contributed by Asp140. Catalysis depends on Glu173, which acts as the Proton acceptor. 3 residues coordinate Zn(2+): Glu174, Asp196, and His379.

It belongs to the peptidase M20B family. Zn(2+) is required as a cofactor.

The protein localises to the cytoplasm. The enzyme catalyses Release of the N-terminal residue from a tripeptide.. Functionally, cleaves the N-terminal amino acid of tripeptides. This chain is Peptidase T, found in Shigella boydii serotype 18 (strain CDC 3083-94 / BS512).